Reading from the N-terminus, the 332-residue chain is Super small secreted glycoprotein (332 aa).

The N-terminal stretch at methionine 1–serine 33 is a signal peptide. N-linked (GlcNAc...) asparagine; by host glycosylation is present at asparagine 41. 2 disulfides stabilise this stretch: cysteine 109-cysteine 136 and cysteine 122-cysteine 148. Asparagine 205, asparagine 239, asparagine 258, and asparagine 269 each carry an N-linked (GlcNAc...) asparagine; by host glycan.

It belongs to the filoviruses glycoprotein family.

It localises to the secreted. This Homo sapiens (Human) protein is Super small secreted glycoprotein (GP).